The sequence spans 98 residues: uncharacterized protein (98 aa).

This is an uncharacterized protein from Methanocaldococcus jannaschii (strain ATCC 43067 / DSM 2661 / JAL-1 / JCM 10045 / NBRC 100440) (Methanococcus jannaschii).